The following is a 454-amino-acid chain: Bifunctional protein GlmU (454 aa).

The segment at methionine 1 to arginine 227 is pyrophosphorylase. UDP-N-acetyl-alpha-D-glucosamine contacts are provided by residues leucine 9–glycine 12, lysine 23, glutamine 74, glycine 79–threonine 80, tyrosine 101–aspartate 103, glycine 138, glutamate 152, asparagine 167, and asparagine 225. Aspartate 103 serves as a coordination point for Mg(2+). Asparagine 225 contributes to the Mg(2+) binding site. The linker stretch occupies residues leucine 228 to glutamate 248. Residues glycine 249–lysine 454 form an N-acetyltransferase region. UDP-N-acetyl-alpha-D-glucosamine is bound by residues arginine 331 and lysine 349. Histidine 361 (proton acceptor) is an active-site residue. UDP-N-acetyl-alpha-D-glucosamine-binding residues include tyrosine 364 and asparagine 375. Acetyl-CoA-binding positions include alanine 378, asparagine 384–tyrosine 385, serine 403, alanine 421, and arginine 438.

It in the N-terminal section; belongs to the N-acetylglucosamine-1-phosphate uridyltransferase family. This sequence in the C-terminal section; belongs to the transferase hexapeptide repeat family. As to quaternary structure, homotrimer. Requires Mg(2+) as cofactor.

The protein localises to the cytoplasm. It carries out the reaction alpha-D-glucosamine 1-phosphate + acetyl-CoA = N-acetyl-alpha-D-glucosamine 1-phosphate + CoA + H(+). The enzyme catalyses N-acetyl-alpha-D-glucosamine 1-phosphate + UTP + H(+) = UDP-N-acetyl-alpha-D-glucosamine + diphosphate. It functions in the pathway nucleotide-sugar biosynthesis; UDP-N-acetyl-alpha-D-glucosamine biosynthesis; N-acetyl-alpha-D-glucosamine 1-phosphate from alpha-D-glucosamine 6-phosphate (route II): step 2/2. It participates in nucleotide-sugar biosynthesis; UDP-N-acetyl-alpha-D-glucosamine biosynthesis; UDP-N-acetyl-alpha-D-glucosamine from N-acetyl-alpha-D-glucosamine 1-phosphate: step 1/1. Its pathway is bacterial outer membrane biogenesis; LPS lipid A biosynthesis. In terms of biological role, catalyzes the last two sequential reactions in the de novo biosynthetic pathway for UDP-N-acetylglucosamine (UDP-GlcNAc). The C-terminal domain catalyzes the transfer of acetyl group from acetyl coenzyme A to glucosamine-1-phosphate (GlcN-1-P) to produce N-acetylglucosamine-1-phosphate (GlcNAc-1-P), which is converted into UDP-GlcNAc by the transfer of uridine 5-monophosphate (from uridine 5-triphosphate), a reaction catalyzed by the N-terminal domain. This Mannheimia succiniciproducens (strain KCTC 0769BP / MBEL55E) protein is Bifunctional protein GlmU.